The primary structure comprises 294 residues: Bifunctional protein FolD (294 aa).

Residues 166–168 (GRS), S195, and I236 contribute to the NADP(+) site.

It belongs to the tetrahydrofolate dehydrogenase/cyclohydrolase family. In terms of assembly, homodimer.

It catalyses the reaction (6R)-5,10-methylene-5,6,7,8-tetrahydrofolate + NADP(+) = (6R)-5,10-methenyltetrahydrofolate + NADPH. It carries out the reaction (6R)-5,10-methenyltetrahydrofolate + H2O = (6R)-10-formyltetrahydrofolate + H(+). Its pathway is one-carbon metabolism; tetrahydrofolate interconversion. Catalyzes the oxidation of 5,10-methylenetetrahydrofolate to 5,10-methenyltetrahydrofolate and then the hydrolysis of 5,10-methenyltetrahydrofolate to 10-formyltetrahydrofolate. The chain is Bifunctional protein FolD from Chloroherpeton thalassium (strain ATCC 35110 / GB-78).